Here is a 312-residue protein sequence, read N- to C-terminus: Pyrimidine-specific ribonucleoside hydrolase RihA (312 aa).

Residue His240 is part of the active site.

Belongs to the IUNH family. RihA subfamily.

Hydrolyzes cytidine or uridine to ribose and cytosine or uracil, respectively. This chain is Pyrimidine-specific ribonucleoside hydrolase RihA, found in Citrobacter koseri (strain ATCC BAA-895 / CDC 4225-83 / SGSC4696).